We begin with the raw amino-acid sequence, 459 residues long: Mitochondrial distribution and morphology protein 10 (459 aa).

It belongs to the MDM10 family. In terms of assembly, component of the ER-mitochondria encounter structure (ERMES) or MDM complex, composed of MMM1, MDM10, MDM12 and MDM34. Associates with the mitochondrial outer membrane sorting assembly machinery SAM(core) complex.

The protein resides in the mitochondrion outer membrane. Component of the ERMES/MDM complex, which serves as a molecular tether to connect the endoplasmic reticulum and mitochondria. Components of this complex are involved in the control of mitochondrial shape and protein biogenesis and may function in phospholipid exchange. MDM10 is involved in the late assembly steps of the general translocase of the mitochondrial outer membrane (TOM complex). Functions in the TOM40-specific route of the assembly of outer membrane beta-barrel proteins, including the association of TOM40 with the receptor TOM22 and small TOM proteins. Can associate with the SAM(core) complex as well as the MDM12-MMM1 complex, both involved in late steps of the major beta-barrel assembly pathway, that is responsible for biogenesis of all outer membrane beta-barrel proteins. May act as a switch that shuttles between both complexes and channels precursor proteins into the TOM40-specific pathway. Plays a role in mitochondrial morphology and in the inheritance of mitochondria. The sequence is that of Mitochondrial distribution and morphology protein 10 from Clavispora lusitaniae (strain ATCC 42720) (Yeast).